We begin with the raw amino-acid sequence, 424 residues long: Chitinase CLP (424 aa).

The first 18 residues, Met1–Ser18, serve as a signal peptide directing secretion. The Peptidase A1 domain maps to Ala43–Ser405. 3 N-linked (GlcNAc...) asparagine glycosylation sites follow: Asn139, Asn345, and Asn419.

It belongs to the peptidase A1 family. As to expression, expressed in roots. Expressed at low levels in leaf sheaths, stems and flowers.

It is found in the secreted. Its subcellular location is the extracellular space. The protein localises to the apoplast. The enzyme catalyses Random endo-hydrolysis of N-acetyl-beta-D-glucosaminide (1-&gt;4)-beta-linkages in chitin and chitodextrins.. In terms of biological role, chitinase that possesses antifungal activity. Inhibits the growth of the fungal pathogen Rhizoctonia solani by degrading the fungal cell wall. Does not possess inhibiting activity against fungal endo-1,4-beta-D-xylanases belonging to glycoside hydrolase family 10 (GH10) and family 11 (GH11). Involved in the regulation of plant growth by regulating the intracellular calcium ion concentration in roots. This Oryza sativa subsp. japonica (Rice) protein is Chitinase CLP.